Consider the following 95-residue polypeptide: Probable FAD-linked sulfhydryl oxidase OPG072 (95 aa).

The Intravirion portion of the chain corresponds to 1–8 (MNPKHWGR). In terms of domain architecture, ERV/ALR sulfhydryl oxidase spans 1–95 (MNPKHWGRAA…AIDVSKVKPL (95 aa)). The helical transmembrane segment at 9-25 (AAWTIIFIVLSQAGLDG) threads the bilayer. Over 26 to 95 (NIEACKRKLY…AIDVSKVKPL (70 aa)) the chain is Virion surface. A disulfide bridge links C43 with C46.

Belongs to the orthopoxvirus OPG072 family. In terms of assembly, interacts with OPG128; this interaction involves formation of a transient disulfide-bonded intermediate, allowing disulfide bond transfer. It depends on FAD as a cofactor.

It is found in the virion membrane. The protein localises to the host cytoplasm. The catalysed reaction is 2 R'C(R)SH + O2 = R'C(R)S-S(R)CR' + H2O2. FAD-dependent sulfhydryl oxidase that catalyzes disulfide bond formation. The complete pathway for formation of disulfide bonds in intracellular virion membrane proteins sequentially involves thiol-disulfide transfer between OPG072, OPG128 and OPG088. The polypeptide is Probable FAD-linked sulfhydryl oxidase OPG072 (OPG072) (Variola virus (isolate Human/India/Ind3/1967) (VARV)).